The following is a 401-amino-acid chain: Probable trafficking protein particle complex subunit 13 homolog (401 aa).

This sequence belongs to the TRAPPC13 family.

This Caenorhabditis elegans protein is Probable trafficking protein particle complex subunit 13 homolog.